We begin with the raw amino-acid sequence, 291 residues long: ATP synthase gamma chain (291 aa).

Belongs to the ATPase gamma chain family. In terms of assembly, F-type ATPases have 2 components, CF(1) - the catalytic core - and CF(0) - the membrane proton channel. CF(1) has five subunits: alpha(3), beta(3), gamma(1), delta(1), epsilon(1). CF(0) has three main subunits: a, b and c.

The protein localises to the cell inner membrane. Produces ATP from ADP in the presence of a proton gradient across the membrane. The gamma chain is believed to be important in regulating ATPase activity and the flow of protons through the CF(0) complex. This is ATP synthase gamma chain from Sulfurihydrogenibium sp. (strain YO3AOP1).